The sequence spans 154 residues: Protein SprT-like (154 aa).

In terms of domain architecture, SprT-like spans 6–144; it reads LQQLTETISL…CGTCHGKLKF (139 aa). His-67 lines the Zn(2+) pocket. The active site involves Glu-68. A Zn(2+)-binding site is contributed by His-71.

The protein belongs to the SprT family. It depends on Zn(2+) as a cofactor.

It is found in the cytoplasm. The protein is Protein SprT-like of Shouchella clausii (strain KSM-K16) (Alkalihalobacillus clausii).